The chain runs to 128 residues: UPF0325 protein KPN78578_01770 (128 aa).

It belongs to the UPF0325 family.

The polypeptide is UPF0325 protein KPN78578_01770 (Klebsiella pneumoniae subsp. pneumoniae (strain ATCC 700721 / MGH 78578)).